A 45-amino-acid chain; its full sequence is Movement protein p5 (45 aa).

Residues 8-28 (ILLLVVDFVFVIILLLVLTFV) form a helical membrane-spanning segment.

Its subcellular location is the host rough endoplasmic reticulum membrane. In terms of biological role, transports viral genome to neighboring plant cells directly through plasmosdesmata, without any budding. The movement protein allows efficient cell to cell propagation, by bypassing the host cell wall barrier. Two movement proteins, p6, Hsp70h and three structural proteins, CP, CPm, and P64 are essential for cell-cell movement. Also plays a role in virion formation. Together with CPm and p64, encapsidates the 5'-terminal portion of the viral genome. This is Movement protein p5 from Grapevine leafroll-associated virus 3 (isolate United States/NY1) (GLRaV-3).